Consider the following 549-residue polypeptide: Glucose-6-phosphate isomerase (549 aa).

Glu355 functions as the Proton donor in the catalytic mechanism. Active-site residues include His386 and Lys514.

It belongs to the GPI family.

It localises to the cytoplasm. It carries out the reaction alpha-D-glucose 6-phosphate = beta-D-fructose 6-phosphate. It functions in the pathway carbohydrate biosynthesis; gluconeogenesis. The protein operates within carbohydrate degradation; glycolysis; D-glyceraldehyde 3-phosphate and glycerone phosphate from D-glucose: step 2/4. Catalyzes the reversible isomerization of glucose-6-phosphate to fructose-6-phosphate. This chain is Glucose-6-phosphate isomerase, found in Salmonella schwarzengrund (strain CVM19633).